We begin with the raw amino-acid sequence, 128 residues long: 2-iminobutanoate/2-iminopropanoate deaminase (128 aa).

Substrate is bound at residue arginine 105.

The protein belongs to the RutC family. In terms of assembly, homotrimer.

The protein resides in the cytoplasm. It catalyses the reaction 2-iminobutanoate + H2O = 2-oxobutanoate + NH4(+). The catalysed reaction is 2-iminopropanoate + H2O = pyruvate + NH4(+). The protein operates within amino-acid biosynthesis; L-isoleucine biosynthesis; 2-oxobutanoate from L-threonine. Its function is as follows. Accelerates the release of ammonia from reactive enamine/imine intermediates of the PLP-dependent threonine dehydratase (IlvA) in the low water environment of the cell. It catalyzes the deamination of enamine/imine intermediates to yield 2-ketobutyrate and ammonia. It is required for the detoxification of reactive intermediates of IlvA due to their highly nucleophilic abilities and to avoid they are captured by anthranilate phosphoribosyltransferase (TrpD) to generate PRA, an intermediate in the alternative pyrimidine biosynthetic (APB) pathway. Also required for full activity of IlvE which is involved in the isoleucine biosynthesis. RidA also accelerates the release of pyruvate produced by IlvA from L-serine. This chain is 2-iminobutanoate/2-iminopropanoate deaminase, found in Salmonella typhimurium (strain LT2 / SGSC1412 / ATCC 700720).